A 138-amino-acid chain; its full sequence is Putative pre-16S rRNA nuclease (138 aa).

The protein belongs to the YqgF nuclease family.

The protein resides in the cytoplasm. Functionally, could be a nuclease involved in processing of the 5'-end of pre-16S rRNA. In Azobacteroides pseudotrichonymphae genomovar. CFP2, this protein is Putative pre-16S rRNA nuclease.